The chain runs to 515 residues: Maturase K (515 aa).

Belongs to the intron maturase 2 family. MatK subfamily.

Its subcellular location is the plastid. The protein resides in the chloroplast. Usually encoded in the trnK tRNA gene intron. Probably assists in splicing its own and other chloroplast group II introns. This Pinus armandii (Chinese white pine) protein is Maturase K.